The chain runs to 224 residues: PKHD-type hydroxylase Sbal195_0750 (224 aa).

Positions 78–176 constitute a Fe2OG dioxygenase domain; the sequence is QFYPPLFNRY…RTAAFMWLQS (99 aa). 3 residues coordinate Fe cation: histidine 96, aspartate 98, and histidine 157. 2-oxoglutarate is bound at residue arginine 167.

It depends on Fe(2+) as a cofactor. L-ascorbate is required as a cofactor.

The sequence is that of PKHD-type hydroxylase Sbal195_0750 from Shewanella baltica (strain OS195).